Reading from the N-terminus, the 556-residue chain is Neurofilament light polypeptide (556 aa).

Ser2 is modified (N-acetylserine). A head region spans residues 2–94; it reads SSYGYDPFFP…KSIRSQERAQ (93 aa). The 312-residue stretch at 91-402 folds into the IF rod domain; that stretch reads ERAQLQDLND…KLLEGEETRL (312 aa). The segment at 95-126 is coil 1A; that stretch reads LQDLNDRFACFIERVHELEQQNKVLEAELLVL. Residues 127-139 are linker 1; that stretch reads RQKHAEPSRFRAL. The coil 1B stretch occupies residues 140–235; the sequence is YEQEIRELRL…KVHEEELAEL (96 aa). The linker 12 stretch occupies residues 236-254; the sequence is QAQIQYAHLSVEMDVSAKP. The segment at 255-273 is coil 2A; it reads DLSAALRDIRAQYEKLAAR. The tract at residues 274-282 is linker 2; sequence NMQNAEEWF. The coil 2B stretch occupies residues 283 to 398; it reads RSRFTVLSES…AAYRKLLEGE (116 aa). The tract at residues 399–445 is tail, subdomain A; that stretch reads ETRLSFTSVGSITSGYTQTAPTFGRSAYSGLQSTSYLMTTRSFPTYY. The tract at residues 399–556 is tail; the sequence is ETRLSFTSVG…KEETEVKKKA (158 aa). A tail, subdomain B (acidic) region spans residues 446-556; sequence SSHVQEEQIE…KEETEVKKKA (111 aa). Positions 464 to 473 are enriched in low complexity; sequence KAGEAKAAPA. Positions 464 to 556 are disordered; that stretch reads KAGEAKAAPA…KEETEVKKKA (93 aa). Over residues 474–540 the composition is skewed to acidic residues; the sequence is EEGEEEEKEE…AEETGEEEKE (67 aa). The span at 541-556 shows a compositional bias: basic and acidic residues; that stretch reads EKEAAGKEETEVKKKA.

The protein belongs to the intermediate filament family. In terms of assembly, forms homodimers (in vitro).

The protein localises to the cell projection. It localises to the axon. Its subcellular location is the cytoplasm. The protein resides in the cytoskeleton. Functionally, neurofilaments usually contain three intermediate filament proteins: NEFL, NEFM, and NEFH which are involved in the maintenance of neuronal caliber. May additionally cooperate with the neuronal intermediate filament proteins to form neuronal filamentous networks. This chain is Neurofilament light polypeptide (NEFL), found in Coturnix japonica (Japanese quail).